The sequence spans 554 residues: Urocanate hydratase (554 aa).

Residues 52-53 (GG), glutamine 130, 176-178 (GMG), glutamate 196, arginine 201, 242-243 (NA), 263-267 (QTSAH), 273-274 (YL), and tyrosine 322 each bind NAD(+). Cysteine 410 is a catalytic residue. Glycine 492 lines the NAD(+) pocket.

It belongs to the urocanase family. It depends on NAD(+) as a cofactor.

The protein localises to the cytoplasm. The catalysed reaction is 4-imidazolone-5-propanoate = trans-urocanate + H2O. Its pathway is amino-acid degradation; L-histidine degradation into L-glutamate; N-formimidoyl-L-glutamate from L-histidine: step 2/3. In terms of biological role, catalyzes the conversion of urocanate to 4-imidazolone-5-propionate. The chain is Urocanate hydratase from Shewanella halifaxensis (strain HAW-EB4).